The chain runs to 243 residues: Triosephosphate isomerase (243 aa).

9–11 (NWK) serves as a coordination point for substrate. Residue H96 is the Electrophile of the active site. The Proton acceptor role is filled by E165. Residues G171, S204, and 225 to 226 (GG) contribute to the substrate site.

The protein belongs to the triosephosphate isomerase family. In terms of assembly, homodimer.

The protein resides in the cytoplasm. It carries out the reaction D-glyceraldehyde 3-phosphate = dihydroxyacetone phosphate. Its pathway is carbohydrate biosynthesis; gluconeogenesis. The protein operates within carbohydrate degradation; glycolysis; D-glyceraldehyde 3-phosphate from glycerone phosphate: step 1/1. Its function is as follows. Involved in the gluconeogenesis. Catalyzes stereospecifically the conversion of dihydroxyacetone phosphate (DHAP) to D-glyceraldehyde-3-phosphate (G3P). In Synechococcus sp. (strain WH7803), this protein is Triosephosphate isomerase.